The primary structure comprises 330 residues: Aspartate--ammonia ligase (330 aa).

This sequence belongs to the class-II aminoacyl-tRNA synthetase family. AsnA subfamily.

The protein localises to the cytoplasm. It carries out the reaction L-aspartate + NH4(+) + ATP = L-asparagine + AMP + diphosphate + H(+). It functions in the pathway amino-acid biosynthesis; L-asparagine biosynthesis; L-asparagine from L-aspartate (ammonia route): step 1/1. The protein is Aspartate--ammonia ligase of Shigella dysenteriae serotype 1 (strain Sd197).